A 395-amino-acid polypeptide reads, in one-letter code: Chorismate synthase (395 aa).

Residues R40 and R46 each contribute to the NADP(+) site. Residues 98–120 (LPREGRNAPLSRPRPGHADLTGM) are disordered. Residues 134–136 (RSS), 256–257 (QA), G301, 316–320 (KPIPS), and R342 each bind FMN.

Belongs to the chorismate synthase family. Homotetramer. FMNH2 is required as a cofactor.

It catalyses the reaction 5-O-(1-carboxyvinyl)-3-phosphoshikimate = chorismate + phosphate. It functions in the pathway metabolic intermediate biosynthesis; chorismate biosynthesis; chorismate from D-erythrose 4-phosphate and phosphoenolpyruvate: step 7/7. Functionally, catalyzes the anti-1,4-elimination of the C-3 phosphate and the C-6 proR hydrogen from 5-enolpyruvylshikimate-3-phosphate (EPSP) to yield chorismate, which is the branch point compound that serves as the starting substrate for the three terminal pathways of aromatic amino acid biosynthesis. This reaction introduces a second double bond into the aromatic ring system. The sequence is that of Chorismate synthase from Bifidobacterium longum subsp. infantis (strain ATCC 15697 / DSM 20088 / JCM 1222 / NCTC 11817 / S12).